The primary structure comprises 655 residues: Interferon-induced GTP-binding protein Mx2 (655 aa).

Residues 1 to 18 (MVLSTEENTGVDSVNLPS) are compositionally biased toward polar residues. The tract at residues 1–28 (MVLSTEENTGVDSVNLPSGETGLGEKDQ) is disordered. In terms of domain architecture, Dynamin-type G spans 60-333 (DLALPAIAVI…LISHICKSLP (274 aa)). The interval 70–77 (GDQSSGKS) is G1 motif. 70–77 (GDQSSGKS) contacts GTP. The G2 motif stretch occupies residues 95–97 (VTR). Residues 171–174 (DLPG) are G3 motif. GTP contacts are provided by residues 171–175 (DLPGI) and 240–243 (TKPD). Residues 240–243 (TKPD) form a G4 motif region. The segment at 272-275 (KCRG) is G5 motif. The segment at 542 to 562 (EAEEEKKTKHGTSSSSQSQDL) is disordered. The segment covering 552–562 (GTSSSSQSQDL) has biased composition (low complexity). Positions 567 to 655 (MAEIFQHLNA…ARRRLAKFPG (89 aa)) constitute a GED domain.

Belongs to the TRAFAC class dynamin-like GTPase superfamily. Dynamin/Fzo/YdjA family.

Its subcellular location is the cytoplasm. Functionally, interferon-induced dynamin-like GTPase with antiviral activity against vesicular stomatitis virus (VSV) and Hantaan virus (HNTV). In Mus musculus (Mouse), this protein is Interferon-induced GTP-binding protein Mx2 (Mx2).